The sequence spans 91 residues: Tityustoxin-19 (91 aa).

The first 25 residues, 1-25, serve as a signal peptide directing secretion; the sequence is MVATNRCCVFALLFALLLVHSLTEA. The BetaSPN-type CS-alpha/beta domain maps to 58–91; the sequence is EYACPAIDKFCEDHCAAKKAVGKCDDFKCNCIKL. Cystine bridges form between C61/C81, C68/C86, and C72/C88.

It belongs to the long chain scorpion toxin family. Class 2 subfamily. Expressed by the venom gland.

Its subcellular location is the secreted. Its function is as follows. May function as a voltage-gated potassium channel blocker and may have cytolytic activity. Is often not detected in the tested venom fractions, suggesting that the toxin is likely subject to frequent processing within the venom. Functionally, specific and reversible blocker of the potassium channel Kv1.2/KCNA2 (IC(50)=544 nM). In terms of biological role, shows cytolytic effects on erythrocytes and induces non-selective pore formation when high concentrations (300 nM) are applied on oocytes. Does not cause hemolysis, mast cell degranulation, LDH release, and does not have antimicrobial activity. Does not cause edema and pain. The chain is Tityustoxin-19 from Tityus serrulatus (Brazilian scorpion).